Here is a 461-residue protein sequence, read N- to C-terminus: Transcription factor SOX-10 (461 aa).

5 disordered regions span residues 1–60, 154–191, 205–268, 350–369, and 433–461; these read MADD…ADDD, LRMQHKKDHPDYKYQPRRRKNGKATQGEGEGQVEGEAG, LDHR…DFGN, KAQVKTEGSAPGGHYTDQPS, and AISDPAPSVPQSHSPTHWEQPVYTTLSRP. Over residues 30 to 42 the composition is skewed to polar residues; sequence ASDNSSHLASSGN. The dimerization (DIM) stretch occupies residues 56–96; it reads EADDDKFPVCIREAVSQVLSGYDWTLVPMPVRVNGSNKSKP. A DNA-binding region (HMG box) is located at residues 98–166; that stretch reads VKRPMNAFMV…QHKKDHPDYK (69 aa). Over residues 154–167 the composition is skewed to basic and acidic residues; that stretch reads LRMQHKKDHPDYKY. Positions 181–191 are enriched in gly residues; sequence EGEGQVEGEAG. The transactivation domain (TAM) stretch occupies residues 221 to 306; it reads PEHSSGQSHG…NGHAGHPGHV (86 aa). The span at 247–264 shows a compositional bias: basic and acidic residues; that stretch reads ADSKREGRSLGEGGKPHI. The interval 350–461 is transactivation domain (TAC); sequence KAQVKTEGSA…QPVYTTLSRP (112 aa). The segment covering 441 to 461 has biased composition (polar residues); that stretch reads VPQSHSPTHWEQPVYTTLSRP.

It is found in the cytoplasm. It localises to the nucleus. Functionally, transcription factor that plays a central role in developing and mature glia. Specifically activates expression of myelin genes, during oligodendrocyte (OL) maturation, thereby playing a central role in oligodendrocyte maturation and CNS myelination. The chain is Transcription factor SOX-10 (SOX10) from Gallus gallus (Chicken).